We begin with the raw amino-acid sequence, 205 residues long: NADH-quinone oxidoreductase subunit C (205 aa).

The protein belongs to the complex I 30 kDa subunit family. As to quaternary structure, NDH-1 is composed of 14 different subunits. Subunits NuoB, C, D, E, F, and G constitute the peripheral sector of the complex.

It is found in the cell inner membrane. The catalysed reaction is a quinone + NADH + 5 H(+)(in) = a quinol + NAD(+) + 4 H(+)(out). Its function is as follows. NDH-1 shuttles electrons from NADH, via FMN and iron-sulfur (Fe-S) centers, to quinones in the respiratory chain. The immediate electron acceptor for the enzyme in this species is believed to be ubiquinone. Couples the redox reaction to proton translocation (for every two electrons transferred, four hydrogen ions are translocated across the cytoplasmic membrane), and thus conserves the redox energy in a proton gradient. The chain is NADH-quinone oxidoreductase subunit C from Nitrosospira multiformis (strain ATCC 25196 / NCIMB 11849 / C 71).